The sequence spans 120 residues: Adult-specific rigid cuticular protein 11.9 (120 aa).

Residues 9–87 enclose the Chitin-binding type R&amp;R domain; the sequence is GGAYNFGYNT…ALAAMAPKAP (79 aa).

Functionally, component of the rigid cuticle of the spider. The polypeptide is Adult-specific rigid cuticular protein 11.9 (Araneus diadematus (European garden spider)).